A 305-amino-acid polypeptide reads, in one-letter code: Acetyl-coenzyme A carboxylase carboxyl transferase subunit alpha (305 aa).

A CoA carboxyltransferase C-terminal domain is found at 33 to 280; sequence AKLESSTALS…KEQILKDLAD (248 aa).

This sequence belongs to the AccA family. In terms of assembly, acetyl-CoA carboxylase is a heterohexamer composed of biotin carboxyl carrier protein (AccB), biotin carboxylase (AccC) and two subunits each of ACCase subunit alpha (AccA) and ACCase subunit beta (AccD).

Its subcellular location is the cytoplasm. The catalysed reaction is N(6)-carboxybiotinyl-L-lysyl-[protein] + acetyl-CoA = N(6)-biotinyl-L-lysyl-[protein] + malonyl-CoA. Its pathway is lipid metabolism; malonyl-CoA biosynthesis; malonyl-CoA from acetyl-CoA: step 1/1. Component of the acetyl coenzyme A carboxylase (ACC) complex. First, biotin carboxylase catalyzes the carboxylation of biotin on its carrier protein (BCCP) and then the CO(2) group is transferred by the carboxyltransferase to acetyl-CoA to form malonyl-CoA. This is Acetyl-coenzyme A carboxylase carboxyl transferase subunit alpha from Treponema denticola (strain ATCC 35405 / DSM 14222 / CIP 103919 / JCM 8153 / KCTC 15104).